The primary structure comprises 188 residues: E3 ubiquitin-protein ligase RNF183 (188 aa).

Topologically, residues 1–157 (MAEQQGREPE…RECFRNPHFR (157 aa)) are cytoplasmic. An RING-type zinc finger spans residues 11 to 58 (CPVCWNPFNNTFHTPKVLDCCHSFCVECLAHISLVTPTRRRLLCPLCR). The helical; Anchor for type IV membrane protein transmembrane segment at 158–178 (IFAYMMAVILCGTVLFIFSIF) threads the bilayer. Topologically, residues 179-188 (CTRRFFWGVG) are lumenal.

In terms of assembly, interacts with FATE1. Interacts with SEC16A. Interacts with BCL2L1. Autoubiquitinated (in vitro).

It is found in the endoplasmic reticulum membrane. It localises to the endoplasmic reticulum. The protein resides in the golgi apparatus. The protein localises to the cis-Golgi network membrane. Its subcellular location is the lysosome. It catalyses the reaction S-ubiquitinyl-[E2 ubiquitin-conjugating enzyme]-L-cysteine + [acceptor protein]-L-lysine = [E2 ubiquitin-conjugating enzyme]-L-cysteine + N(6)-ubiquitinyl-[acceptor protein]-L-lysine.. It functions in the pathway protein modification; protein ubiquitination. In terms of biological role, acts as an E3 ubiquitin ligase catalyzing the covalent attachment of ubiquitin moieties onto substrate proteins. Triggers apoptosis in response to prolonged ER stress by mediating the polyubiquitination and subsequent proteasomal degradation of BCL2L1. May collaborate with FATE1 to restrain BIK protein levels thus regulating apoptotic signaling. The protein is E3 ubiquitin-protein ligase RNF183 (RNF183) of Bos taurus (Bovine).